The primary structure comprises 1295 residues: Serine protease sat autotransporter (1295 aa).

A signal peptide spans M1–A49. The Peptidase S6 domain maps to N51–E300. Active-site charge relay system residues include H121, D149, and S256. The 267-residue stretch at D1029 to F1295 folds into the Autotransporter domain.

In terms of processing, cleaved to release the mature protein from the outer membrane.

It is found in the periplasm. Its subcellular location is the secreted. The protein localises to the cell surface. The protein resides in the cell outer membrane. With respect to regulation, inhibited by phenylmethylsulfonyl fluoride and Pefabloc. In terms of biological role, shows serine protease activity and displays cytophatic activity, including elongation, rounding, and detachment of a proportion of the cells from monolayer in culture. Triggers vacuolation within the cytoplasm of the human bladder and kidney cells. In Escherichia coli O6:H1 (strain CFT073 / ATCC 700928 / UPEC), this protein is Serine protease sat autotransporter (sat).